The primary structure comprises 429 residues: UPF0597 protein GSU1527 (429 aa).

The protein belongs to the UPF0597 family.

The chain is UPF0597 protein GSU1527 from Geobacter sulfurreducens (strain ATCC 51573 / DSM 12127 / PCA).